A 224-amino-acid polypeptide reads, in one-letter code: Perchlorate reductase assembly chaperone protein (224 aa).

This sequence belongs to the type II DMSO reductase enzyme chaperone family.

It localises to the cytoplasm. Functionally, may function as a system-specific molybdenum chaperone protein essential for the assembly of the perchlorate reductase PcrAB complex prior to its periplasmic translocation via the Tat pathway. This chain is Perchlorate reductase assembly chaperone protein (pcrD), found in Dechloromonas aromatica (strain RCB).